Consider the following 162-residue polypeptide: Regulator of sigma D (162 aa).

This sequence belongs to the Rsd/AlgQ family. In terms of assembly, interacts with RpoD.

It localises to the cytoplasm. Functionally, binds RpoD and negatively regulates RpoD-mediated transcription activation by preventing the interaction between the primary sigma factor RpoD with the catalytic core of the RNA polymerase and with promoter DNA. May be involved in replacement of the RNA polymerase sigma subunit from RpoD to RpoS during the transition from exponential growth to the stationary phase. This chain is Regulator of sigma D, found in Salmonella choleraesuis (strain SC-B67).